An 84-amino-acid polypeptide reads, in one-letter code: Sec-independent protein translocase protein TatA (84 aa).

A helical transmembrane segment spans residues 4 to 24 (MSPVHWLILAVVLLVVFGGGG). A disordered region spans residues 46–84 (DDESMTATDATQAPGHISPPNQNPGYSQTTSSETHRNQV). The segment covering 64–77 (PPNQNPGYSQTTSS) has biased composition (polar residues).

The protein belongs to the TatA/E family. As to quaternary structure, the Tat system comprises two distinct complexes: a TatABC complex, containing multiple copies of TatA, TatB and TatC subunits, and a separate TatA complex, containing only TatA subunits. Substrates initially bind to the TatABC complex, which probably triggers association of the separate TatA complex to form the active translocon.

The protein resides in the cell inner membrane. Its function is as follows. Part of the twin-arginine translocation (Tat) system that transports large folded proteins containing a characteristic twin-arginine motif in their signal peptide across membranes. TatA could form the protein-conducting channel of the Tat system. The protein is Sec-independent protein translocase protein TatA of Gluconobacter oxydans (strain 621H) (Gluconobacter suboxydans).